A 246-amino-acid polypeptide reads, in one-letter code: MLLIPAIDLKDGRCVRLRQGDLDEATVFSEDPAAMATHWLDLGARRLHLVDLNGAVAGKPKNDAPIKAILDAVGDDIPVQIGGGIRDLDTIESYLDAGISYVIIGTAAVKNPGFLQDACGAFPGHIIVGLDARDGKIATDGWSKLTRHDVLDLAKKFEDYGCEAIIYTDISRDGMLSGVNVDATVRLAQHVRIPVYASGGIAGLSDIEALCAVEEEGVEGAILGRSIYEGALDFQAAQARADELTQ.

The active-site Proton acceptor is the Asp8. Asp131 (proton donor) is an active-site residue.

Belongs to the HisA/HisF family.

It localises to the cytoplasm. It carries out the reaction 1-(5-phospho-beta-D-ribosyl)-5-[(5-phospho-beta-D-ribosylamino)methylideneamino]imidazole-4-carboxamide = 5-[(5-phospho-1-deoxy-D-ribulos-1-ylimino)methylamino]-1-(5-phospho-beta-D-ribosyl)imidazole-4-carboxamide. It participates in amino-acid biosynthesis; L-histidine biosynthesis; L-histidine from 5-phospho-alpha-D-ribose 1-diphosphate: step 4/9. The sequence is that of 1-(5-phosphoribosyl)-5-[(5-phosphoribosylamino)methylideneamino] imidazole-4-carboxamide isomerase from Bordetella petrii (strain ATCC BAA-461 / DSM 12804 / CCUG 43448).